The sequence spans 499 residues: GTPase Der (499 aa).

Positions 3–166 constitute an EngA-type G 1 domain; the sequence is PVIALVGRPN…QALGIFPKDN (164 aa). GTP-binding positions include 9–16, 56–60, and 118–121; these read GRPNVGKS, DTGGI, and NKVD. A disordered region spans residues 166-199; it reads NADENAEGEEGGELAEGEEVVAEGQEPKRIPGPS. Acidic residues predominate over residues 168–186; it reads DENAEGEEGGELAEGEEVV. The segment covering 190 to 199 has biased composition (basic and acidic residues); that stretch reads QEPKRIPGPS. In terms of domain architecture, EngA-type G 2 spans 204–377; sequence IKIAIIGRPN…SVQAAFKSAI (174 aa). GTP contacts are provided by residues 210–217, 257–261, and 322–325; these read GRPNVGKS, DTAGV, and NKWD. The KH-like domain maps to 378-462; that stretch reads TRWPTSRLTQ…PIRIEYKGGD (85 aa). A compositionally biased stretch (basic and acidic residues) spans 459-472; sequence KGGDNPYEGKKNTL. The interval 459–499 is disordered; that stretch reads KGGDNPYEGKKNTLTDRQVNKKRRLMSHHKKAEKKRRDKKR. Residues 478–499 show a composition bias toward basic residues; sequence NKKRRLMSHHKKAEKKRRDKKR.

It belongs to the TRAFAC class TrmE-Era-EngA-EngB-Septin-like GTPase superfamily. EngA (Der) GTPase family. As to quaternary structure, associates with the 50S ribosomal subunit.

In terms of biological role, GTPase that plays an essential role in the late steps of ribosome biogenesis. The sequence is that of GTPase Der from Stutzerimonas stutzeri (strain A1501) (Pseudomonas stutzeri).